The primary structure comprises 485 residues: N-succinylglutamate 5-semialdehyde dehydrogenase 2 (485 aa).

221–226 (GSAAAG) is a binding site for NAD(+). Active-site residues include Glu-244 and Cys-279.

This sequence belongs to the aldehyde dehydrogenase family. AstD subfamily.

It carries out the reaction N-succinyl-L-glutamate 5-semialdehyde + NAD(+) + H2O = N-succinyl-L-glutamate + NADH + 2 H(+). It functions in the pathway amino-acid degradation; L-arginine degradation via AST pathway; L-glutamate and succinate from L-arginine: step 4/5. Its function is as follows. Catalyzes the NAD-dependent reduction of succinylglutamate semialdehyde into succinylglutamate. This is N-succinylglutamate 5-semialdehyde dehydrogenase 2 from Caulobacter vibrioides (strain ATCC 19089 / CIP 103742 / CB 15) (Caulobacter crescentus).